Here is a 258-residue protein sequence, read N- to C-terminus: DNA repair protein RecO (258 aa).

It belongs to the RecO family.

Functionally, involved in DNA repair and RecF pathway recombination. The chain is DNA repair protein RecO from Desulfatibacillum aliphaticivorans.